The chain runs to 257 residues: Imidazole glycerol phosphate synthase subunit HisF (257 aa).

Catalysis depends on residues aspartate 11 and aspartate 130.

It belongs to the HisA/HisF family. Heterodimer of HisH and HisF.

It is found in the cytoplasm. It carries out the reaction 5-[(5-phospho-1-deoxy-D-ribulos-1-ylimino)methylamino]-1-(5-phospho-beta-D-ribosyl)imidazole-4-carboxamide + L-glutamine = D-erythro-1-(imidazol-4-yl)glycerol 3-phosphate + 5-amino-1-(5-phospho-beta-D-ribosyl)imidazole-4-carboxamide + L-glutamate + H(+). Its pathway is amino-acid biosynthesis; L-histidine biosynthesis; L-histidine from 5-phospho-alpha-D-ribose 1-diphosphate: step 5/9. Its function is as follows. IGPS catalyzes the conversion of PRFAR and glutamine to IGP, AICAR and glutamate. The HisF subunit catalyzes the cyclization activity that produces IGP and AICAR from PRFAR using the ammonia provided by the HisH subunit. The protein is Imidazole glycerol phosphate synthase subunit HisF of Prochlorococcus marinus (strain SARG / CCMP1375 / SS120).